The following is a 367-amino-acid chain: sn-glycerol-3-phosphate import ATP-binding protein UgpC (367 aa).

Positions 4–235 constitute an ABC transporter domain; it reads LSLRNVQKTY…PASTFVAGFI (232 aa). Residue 37–44 coordinates ATP; it reads GPSGCGKS.

The protein belongs to the ABC transporter superfamily. sn-glycerol-3-phosphate importer (TC 3.A.1.1.3) family. In terms of assembly, the complex is composed of two ATP-binding proteins (UgpC), two transmembrane proteins (UgpA and UgpE) and a solute-binding protein (UgpB).

The protein resides in the cell inner membrane. It catalyses the reaction sn-glycerol 3-phosphate(out) + ATP + H2O = sn-glycerol 3-phosphate(in) + ADP + phosphate + H(+). In terms of biological role, part of the ABC transporter complex UgpBAEC involved in sn-glycerol-3-phosphate (G3P) import. Responsible for energy coupling to the transport system. The protein is sn-glycerol-3-phosphate import ATP-binding protein UgpC of Cupriavidus metallidurans (strain ATCC 43123 / DSM 2839 / NBRC 102507 / CH34) (Ralstonia metallidurans).